Consider the following 182-residue polypeptide: CDP-diacylglycerol--glycerol-3-phosphate 3-phosphatidyltransferase (182 aa).

Topologically, residues 1 to 12 are cytoplasmic; the sequence is MQLNIPTWLTLF. The helical transmembrane segment at 13-37 threads the bilayer; sequence RVVLIPFFVLAFYLPFVWAPMVCAI. At 38–60 the chain is on the periplasmic side; it reads IFVFAAATDWFDGFLARRWKQTT. A helical transmembrane segment spans residues 61–81; sequence RFGAFLDPVADKVMVAVALVL. Over 82–86 the chain is Cytoplasmic; sequence VAEHY. A helical transmembrane segment spans residues 87-107; the sequence is HSWWITLPAATMIAREIIISS. Topologically, residues 108 to 145 are periplasmic; that stretch reads LREWMAEIGKRSSVAVSWVGKVKTMAQMGSLVGLLWRP. Residues 146 to 168 form a helical membrane-spanning segment; the sequence is DHNVELASFVLLYIAAVLTFWSM. Residues 169 to 181 lie on the Cytoplasmic side of the membrane; sequence FQYLNAAWSDLLE.

Belongs to the CDP-alcohol phosphatidyltransferase class-I family.

The protein resides in the cell inner membrane. The catalysed reaction is a CDP-1,2-diacyl-sn-glycerol + sn-glycerol 3-phosphate = a 1,2-diacyl-sn-glycero-3-phospho-(1'-sn-glycero-3'-phosphate) + CMP + H(+). The protein operates within phospholipid metabolism; phosphatidylglycerol biosynthesis; phosphatidylglycerol from CDP-diacylglycerol: step 1/2. Its function is as follows. Catalyzes the conversion of cytidine diphosphate diacylglycerol (CDP-DG) and glycerol 3-phosphate into phosphatidylglycerol. Essential for the synthesis of anionic phospholipids, thereby playing a role in balancing the ratio of zwitterionic and anionic phospholipids, which is thought to be important for normal membrane function. The polypeptide is CDP-diacylglycerol--glycerol-3-phosphate 3-phosphatidyltransferase (Yersinia pestis bv. Antiqua (strain Antiqua)).